A 503-amino-acid chain; its full sequence is Cytochrome P450 3A29 (503 aa).

Cys-442 is a heme binding site.

The protein belongs to the cytochrome P450 family. Heme is required as a cofactor.

It localises to the endoplasmic reticulum membrane. The protein resides in the microsome membrane. It carries out the reaction an organic molecule + reduced [NADPH--hemoprotein reductase] + O2 = an alcohol + oxidized [NADPH--hemoprotein reductase] + H2O + H(+). In terms of biological role, cytochromes P450 are a group of heme-thiolate monooxygenases. In liver microsomes, this enzyme is involved in an NADPH-dependent electron transport pathway. It oxidizes a variety of structurally unrelated compounds, including steroids, fatty acids, and xenobiotics. The chain is Cytochrome P450 3A29 (CYP3A29) from Sus scrofa (Pig).